We begin with the raw amino-acid sequence, 522 residues long: N-acetylgalactosamine-6-sulfatase (522 aa).

The N-terminal stretch at 1 to 25 is a signal peptide; the sequence is MAPVAAATGWRLLLVLSAAGLGAAG. Residues 27 to 379 are catalytic domain; that stretch reads PQPPNILLLL…PAMLGGQLTD (353 aa). Positions 38, 39, and 78 each coordinate Ca(2+). Cysteine 78 functions as the Nucleophile in the catalytic mechanism. Cysteine 78 bears the 3-oxoalanine (Cys) mark. Residue histidine 141 is part of the active site. N-linked (GlcNAc...) asparagine glycosylation occurs at asparagine 203. Aspartate 288 and asparagine 289 together coordinate Ca(2+). Cysteine 308 and cysteine 419 form a disulfide bridge. A glycan (N-linked (GlcNAc...) asparagine) is linked at asparagine 423. Disulfide bonds link cysteine 489-cysteine 518 and cysteine 501-cysteine 507.

The protein belongs to the sulfatase family. In terms of assembly, homodimer. It depends on Ca(2+) as a cofactor. The conversion to 3-oxoalanine (also known as C-formylglycine, FGly), of a serine or cysteine residue in prokaryotes and of a cysteine residue in eukaryotes, is critical for catalytic activity.

Its subcellular location is the lysosome. The catalysed reaction is Hydrolysis of the 6-sulfate groups of the N-acetyl-D-galactosamine 6-sulfate units of chondroitin sulfate and of the D-galactose 6-sulfate units of keratan sulfate.. The chain is N-acetylgalactosamine-6-sulfatase (GALNS) from Canis lupus familiaris (Dog).